A 104-amino-acid polypeptide reads, in one-letter code: Phosphoribosyl-ATP pyrophosphatase (104 aa).

Belongs to the PRA-PH family.

It is found in the cytoplasm. The enzyme catalyses 1-(5-phospho-beta-D-ribosyl)-ATP + H2O = 1-(5-phospho-beta-D-ribosyl)-5'-AMP + diphosphate + H(+). It participates in amino-acid biosynthesis; L-histidine biosynthesis; L-histidine from 5-phospho-alpha-D-ribose 1-diphosphate: step 2/9. The polypeptide is Phosphoribosyl-ATP pyrophosphatase (Nitrosococcus oceani (strain ATCC 19707 / BCRC 17464 / JCM 30415 / NCIMB 11848 / C-107)).